Consider the following 195-residue polypeptide: MAFALLRPVGAHVLYPDVRLLSEDEENRSESDASDQSFGCCEGLEAARRGPGPGSGRRASNGAGPVVVVRQRQAANARERDRTQSVNTAFTALRTLIPTEPVDRKLSKIETLRLASSYIAHLANVLLLGDAADDGQPCFRAAGGGKSAVPAADGRQPRSICTFCLSNQRKGGSRRDLGGSCLKVRGVAPLRGPRR.

Residues 44–65 (LEAARRGPGPGSGRRASNGAGP) are disordered. Low complexity predominate over residues 56–65 (GRRASNGAGP). Ser60 is subject to Phosphoserine. The region spanning 70–122 (RQRQAANARERDRTQSVNTAFTALRTLIPTEPVDRKLSKIETLRLASSYIAHL) is the bHLH domain.

In terms of assembly, heterodimer; efficient DNA binding requires dimerization with another bHLH protein, such as TCF3/E12. Interacts with MEOX2. In terms of tissue distribution, expressed in heart and skeletal muscle. Specifically expressed in a subpopulation of embryonic stem cells (ESCs), that are still undifferentiated but primed for ifferentiation. Expressed in hematopoietic stem cells (HSCs).

The protein resides in the nucleus. Its function is as follows. Early transcription factor that plays a key role in somitogenesis, paraxial mesoderm development and regulation of stem cell pluripotency. Essential for the mesenchymal to epithelial transition associated with somite formation. Required for somite morphogenesis, thereby regulating patterning of the axial skeleton and skeletal muscles. Required for proper localization of somite epithelium markers during the mesenchymal to epithelial transition. Also plays a key role in regulation of stem cell pluripotency. Promotes pluripotency exit of embryonic stem cells (ESCs) by priming ESCs for differentiation. Acts as a key regulator of self-renewal of hematopoietic stem cells (HSCs) by mediating HSCs quiescence and long-term self-renewal. Together with MEOX2, regulates transcription in heart endothelial cells to regulate fatty acid transport across heart endothelial cells. Acts by forming a heterodimer with another helix-loop-helix (bHLH) protein, such as TCF3/E12, that binds DNA on E-box motifs (5'-CANNTG-3') and activates transcription of target genes. The sequence is that of Transcription factor 15 from Mus musculus (Mouse).